Consider the following 116-residue polypeptide: Thioredoxin (116 aa).

Residues 2-113 (TDSEKSATIK…LLRELSDVVP (112 aa)) enclose the Thioredoxin domain. Cys37 and Cys40 form a disulfide bridge.

This sequence belongs to the thioredoxin family.

In terms of biological role, participates in various redox reactions through the reversible oxidation of its active center dithiol to a disulfide and catalyzes dithiol-disulfide exchange reactions. This chain is Thioredoxin (trxA), found in Mycobacterium bovis (strain ATCC BAA-935 / AF2122/97).